The chain runs to 303 residues: Diaminopimelate epimerase (303 aa).

The substrate site is built by N15, Q47, and N67. C76 (proton donor) is an active-site residue. Residues 77 to 78, N163, N197, and 215 to 216 each bind substrate; these read GN and ER. The active-site Proton acceptor is the C224. A substrate-binding site is contributed by 225 to 226; the sequence is GS.

It belongs to the diaminopimelate epimerase family. In terms of assembly, homodimer.

It localises to the cytoplasm. It catalyses the reaction (2S,6S)-2,6-diaminopimelate = meso-2,6-diaminopimelate. The protein operates within amino-acid biosynthesis; L-lysine biosynthesis via DAP pathway; DL-2,6-diaminopimelate from LL-2,6-diaminopimelate: step 1/1. Catalyzes the stereoinversion of LL-2,6-diaminopimelate (L,L-DAP) to meso-diaminopimelate (meso-DAP), a precursor of L-lysine and an essential component of the bacterial peptidoglycan. This Allorhizobium ampelinum (strain ATCC BAA-846 / DSM 112012 / S4) (Agrobacterium vitis (strain S4)) protein is Diaminopimelate epimerase.